We begin with the raw amino-acid sequence, 592 residues long: Putative amidase ARB_02965 (592 aa).

The first 21 residues, 1–21, serve as a signal peptide directing secretion; sequence MKGPITFLLQLGAVYTSIASA. N-linked (GlcNAc...) asparagine glycosylation is present at Asn120. Catalysis depends on Lys161, which acts as the Charge relay system. N-linked (GlcNAc...) asparagine glycosylation occurs at Asn217. The active-site Charge relay system is the Ser242. Substrate-binding positions include Ser242 and 263-266; that span reads TSGS. The active-site Acyl-ester intermediate is the Ser266. 3 N-linked (GlcNAc...) asparagine glycosylation sites follow: Asn326, Asn430, and Asn528.

The protein belongs to the amidase family.

The protein resides in the secreted. This Arthroderma benhamiae (strain ATCC MYA-4681 / CBS 112371) (Trichophyton mentagrophytes) protein is Putative amidase ARB_02965.